The primary structure comprises 242 residues: Myogenic factor 6 (242 aa).

Residues 31 to 63 (SPLYPGSDGTLSPCQDQMPPEAGSDSSGEEHVL) are disordered. The bHLH domain occupies 93–144 (DRRKAATLRERRRLKKINEAFEALKRRTVANPNQRLPKVEILRSAINYIERL).

In terms of assembly, efficient DNA binding requires dimerization with another bHLH protein. Interacts with CSRP3.

The protein localises to the nucleus. Involved in muscle differentiation (myogenic factor). Induces fibroblasts to differentiate into myoblasts. Probable sequence specific DNA-binding protein. The chain is Myogenic factor 6 (MYF6) from Bos taurus (Bovine).